Reading from the N-terminus, the 368-residue chain is MFYWLIELTNTFPSLSVFRGVLNVFRYITFRTGGAVVTGALFVFLFGPWIIDHLRLRQGKGQPIRTDGPQSHIISKKGTPTMGGLMILSGLVVSTVLWANPLNPYVWIVLAVTLGFGFVGFYDDYLKVTKQSHSGFAGRARLLIEAAIALVACYALVRLGRDPSSTGLAIPFFKDLVIKFGWMYVIFGAFVIVGAGNAVNLTDGLDGLAIVPVMIASASFGLIAYLAGNAVFSDYLQIHYVAGTGELAVLCGAVLGAGLGFLWFNAPPASIFMGDTGSLALGGMLGSIAVAVKHEIVLAVIGGLFVLEAVSVIVQVASFKLTGKRIFRMAPIHHHFEQLGWTEPQIVIRFWIISVMLALVGLSTLKLR.

10 helical membrane passes run 34–54 (GAVV…IDHL), 79–99 (TPTM…VLWA), 102–122 (LNPY…VGFY), 140–160 (ARLL…VRLG), 176–196 (LVIK…VGAG), 207–227 (GLAI…AYLA), 247–267 (LAVL…FNAP), 271–291 (IFMG…IAVA), 296–316 (IVLA…IVQV), and 345–365 (QIVI…LSTL).

The protein belongs to the glycosyltransferase 4 family. MraY subfamily. Mg(2+) serves as cofactor.

Its subcellular location is the cell inner membrane. It catalyses the reaction UDP-N-acetyl-alpha-D-muramoyl-L-alanyl-gamma-D-glutamyl-meso-2,6-diaminopimeloyl-D-alanyl-D-alanine + di-trans,octa-cis-undecaprenyl phosphate = di-trans,octa-cis-undecaprenyl diphospho-N-acetyl-alpha-D-muramoyl-L-alanyl-D-glutamyl-meso-2,6-diaminopimeloyl-D-alanyl-D-alanine + UMP. Its pathway is cell wall biogenesis; peptidoglycan biosynthesis. Functionally, catalyzes the initial step of the lipid cycle reactions in the biosynthesis of the cell wall peptidoglycan: transfers peptidoglycan precursor phospho-MurNAc-pentapeptide from UDP-MurNAc-pentapeptide onto the lipid carrier undecaprenyl phosphate, yielding undecaprenyl-pyrophosphoryl-MurNAc-pentapeptide, known as lipid I. The protein is Phospho-N-acetylmuramoyl-pentapeptide-transferase of Bradyrhizobium sp. (strain ORS 278).